The primary structure comprises 685 residues: Sorbicillinoid biosynthetic cluster transcription factor sor4 (685 aa).

Over residues 1 to 14 the composition is skewed to low complexity; sequence MGSSATATTTGEST. Positions 1-20 are disordered; sequence MGSSATATTTGESTRQQPGL. The segment at residues 22-49 is a DNA-binding region (zn(2)-C6 fungal-type); that stretch reads CEECRRRKARCDRVRPKCGICADSGRNC. Residues 81–112 are disordered; the sequence is GQNDAPSLPQERDSLGCPTPSEKVSPEGDLVS.

It localises to the nucleus. Functionally, transcription factor that acts as the main regulator of the gene cluster that mediates the biosynthesis of sorbicillinoids, a diverse group of yellow secondary metabolites that restrict growth of competing pathogenic fungi but not of bacteria. This Hypocrea jecorina (strain QM6a) (Trichoderma reesei) protein is Sorbicillinoid biosynthetic cluster transcription factor sor4.